Here is a 382-residue protein sequence, read N- to C-terminus: Galactokinase (382 aa).

Residue 34–37 (EHTD) coordinates substrate. 124–130 (GAGLSSS) lines the ATP pocket. Mg(2+) is bound by residues Ser130 and Glu162. Residue Asp174 is the Proton acceptor of the active site. Residue Tyr223 coordinates substrate.

Belongs to the GHMP kinase family. GalK subfamily.

It is found in the cytoplasm. The catalysed reaction is alpha-D-galactose + ATP = alpha-D-galactose 1-phosphate + ADP + H(+). It participates in carbohydrate metabolism; galactose metabolism. In terms of biological role, catalyzes the transfer of the gamma-phosphate of ATP to D-galactose to form alpha-D-galactose-1-phosphate (Gal-1-P). This Escherichia coli O17:K52:H18 (strain UMN026 / ExPEC) protein is Galactokinase.